Here is a 429-residue protein sequence, read N- to C-terminus: Enolase (429 aa).

Gln162 is a binding site for (2R)-2-phosphoglycerate. Glu204 (proton donor) is an active-site residue. Mg(2+) contacts are provided by Asp241, Glu283, and Asp310. (2R)-2-phosphoglycerate is bound by residues Lys335, Arg364, Ser365, and Lys386. Lys335 functions as the Proton acceptor in the catalytic mechanism.

Belongs to the enolase family. Mg(2+) is required as a cofactor.

It localises to the cytoplasm. The protein resides in the secreted. The protein localises to the cell surface. It carries out the reaction (2R)-2-phosphoglycerate = phosphoenolpyruvate + H2O. It functions in the pathway carbohydrate degradation; glycolysis; pyruvate from D-glyceraldehyde 3-phosphate: step 4/5. Catalyzes the reversible conversion of 2-phosphoglycerate (2-PG) into phosphoenolpyruvate (PEP). It is essential for the degradation of carbohydrates via glycolysis. The protein is Enolase of Mycobacterium leprae (strain TN).